Here is a 390-residue protein sequence, read N- to C-terminus: Galactokinase (390 aa).

Position 35-38 (35-38 (EHTD)) interacts with substrate. An ATP-binding site is contributed by 125-131 (GAGLSSS). Residues Ser131 and Glu163 each coordinate Mg(2+). Asp175 functions as the Proton acceptor in the catalytic mechanism. Tyr224 contacts substrate.

It belongs to the GHMP kinase family. GalK subfamily.

It is found in the cytoplasm. The catalysed reaction is alpha-D-galactose + ATP = alpha-D-galactose 1-phosphate + ADP + H(+). The protein operates within carbohydrate metabolism; galactose metabolism. Its function is as follows. Catalyzes the transfer of the gamma-phosphate of ATP to D-galactose to form alpha-D-galactose-1-phosphate (Gal-1-P). The polypeptide is Galactokinase (Proteus mirabilis (strain HI4320)).